We begin with the raw amino-acid sequence, 775 residues long: Isopimaradiene synthase (775 aa).

The transit peptide at 1–36 (MFSSSLKLKTNPLMDNKIHRSSSDRDFRGSTISSVK) directs the protein to the chloroplast. Residues D525, D529, N669, Q672, and E677 each coordinate Mg(2+). Residues 525–529 (DDFFD) carry the DDXXD motif motif.

It belongs to the terpene synthase family. It depends on Mg(2+) as a cofactor. In terms of tissue distribution, ubiquitous expression in roots, stems, leaves and flowers.

It is found in the plastid. The protein resides in the chloroplast. It carries out the reaction (+)-copalyl diphosphate = isopimara-8(14),15-diene + diphosphate. The protein operates within secondary metabolite biosynthesis; terpenoid biosynthesis. Functionally, involved in the biosynthesis of ent-kaurene diterpenoids natural products such as oridonin, miltiradiene, eriocalyxin B and nezukol, known to exhibit antitumor, anti-inflammatory and antibacterial activities. Catalyzes the conversion of (+)-copalyl diphosphate ((+)-CPP) to isopimaradiene. This Isodon rubescens (Rabdosia rubescens) protein is Isopimaradiene synthase.